Here is a 508-residue protein sequence, read N- to C-terminus: UBX domain-containing protein 4 (508 aa).

Positions 1 to 200 (MLWFQGAIPA…PAEDLNIRVE (200 aa)) are interaction with UBQLN1. Residues 1–413 (MLWFQGAIPA…VHSSSGDIWT (413 aa)) are Cytoplasmic-facing. 2 stretches are compositionally biased toward polar residues: residues 117-151 (SETS…QSRN) and 160-187 (TSDT…SGCS). The disordered stretch occupies residues 117–196 (SETSVANGSQ…SDQRPAEDLN (80 aa)). Residues 315 to 393 (ERSTVARIQF…ELAPSASVVV (79 aa)) enclose the UBX domain. An intramembrane segment occupies 414–434 (LLGTVLYPFLAIWRLISNFLF). Residues 435-508 (SNPPPTQTSV…TWNGNSTQQM (74 aa)) lie on the Cytoplasmic side of the membrane. Positions 440–508 (TQTSVRVTSS…TWNGNSTQQM (69 aa)) are disordered. Residues 441–458 (QTSVRVTSSEPPNPASSS) are compositionally biased toward polar residues. A compositionally biased stretch (basic and acidic residues) spans 459 to 491 (KSEKREPVRKRVLEKRGDDFKKEGKIYRLRTQD). Threonine 489 carries the phosphothreonine modification. Positions 498–508 (NTWNGNSTQQM) are enriched in polar residues.

As to quaternary structure, directly interacts with VCP. Interacts with UBQLN1. Forms a complex with VCP and UBQLN1.

It localises to the endoplasmic reticulum membrane. It is found in the nucleus envelope. Its function is as follows. Involved in endoplasmic reticulum-associated protein degradation (ERAD). Acts as a platform to recruit both UBQLN1 and VCP to the ER during ERAD. The protein is UBX domain-containing protein 4 (UBXN4) of Pongo abelii (Sumatran orangutan).